An 891-amino-acid polypeptide reads, in one-letter code: Longitudinals lacking protein, isoform G (891 aa).

In terms of domain architecture, BTB spans Val-32 to Gln-97. Disordered regions lie at residues Leu-115–Leu-200 and Ser-228–Ser-340. Residue Ser-140 is modified to Phosphoserine. At Thr-161 the chain carries Phosphothreonine. Ser-162 and Ser-168 each carry phosphoserine. Composition is skewed to low complexity over residues Ser-162–Pro-175, Ser-228–Thr-251, Thr-263–Ser-293, and Asn-329–Ser-340. Ser-372, Ser-375, and Ser-378 each carry phosphoserine. Residues Gln-446–Ala-467 form a disordered region. The segment covering Gln-449–Thr-462 has biased composition (basic and acidic residues). Residues Ser-696 and Ser-705 each carry the phosphoserine modification. Residue Thr-706 is modified to Phosphothreonine. A phosphoserine mark is found at Ser-749 and Ser-750. A C2H2-type 1; degenerate zinc finger spans residues Tyr-791–Glu-813. A C2H2-type 2 zinc finger spans residues His-821–His-843. The disordered stretch occupies residues Val-840–Lys-891. Ser-874 carries the phosphoserine modification.

As to expression, expressed in both mesoderm and ectoderm with expression highest in the mesectoderm by stage 11. Becomes enriched in a cluster of brain cells, in abdominal histoblasts, and in the embryonic imaginal disks during later stages.

The protein localises to the nucleus. In terms of biological role, putative transcription factor required for axon growth and guidance in the central and peripheral nervous systems. Repels CNS axons away from the midline by promoting the expression of the midline repellent sli and its receptor robo. The protein is Longitudinals lacking protein, isoform G of Drosophila melanogaster (Fruit fly).